Consider the following 472-residue polypeptide: Glutamate--tRNA ligase 2 (472 aa).

The 'HIGH' region motif lies at 12 to 22; that stretch reads PSPSGLLHLGN. A 'KMSKS' region motif is present at residues 253 to 257; the sequence is PLSKR. Lysine 256 serves as a coordination point for ATP.

It belongs to the class-I aminoacyl-tRNA synthetase family. Glutamate--tRNA ligase type 1 subfamily. In terms of assembly, monomer.

The protein resides in the cytoplasm. It catalyses the reaction tRNA(Glu) + L-glutamate + ATP = L-glutamyl-tRNA(Glu) + AMP + diphosphate. Functionally, catalyzes the attachment of glutamate to tRNA(Glu) in a two-step reaction: glutamate is first activated by ATP to form Glu-AMP and then transferred to the acceptor end of tRNA(Glu). The protein is Glutamate--tRNA ligase 2 of Nitrosococcus oceani (strain ATCC 19707 / BCRC 17464 / JCM 30415 / NCIMB 11848 / C-107).